The chain runs to 133 residues: Minor spike protein H (133 aa).

The protein belongs to the microviridae H protein family.

The protein localises to the virion. Its function is as follows. Probably triggers with protein G the injection of the phage DNA into the host upon conformational changes induced by virus-host receptor interaction. The sequence is that of Minor spike protein H from Spiroplasma virus 4 (SpV4).